Consider the following 205-residue polypeptide: MRSRLLLPVPHLPTIREMSEELSHGAAGQEPPASPSLDDYVRCICQLAQPTSVLDKVTAQSRPNRPSRPAWTREKRRQAESPGDSSLCVSSLQPTLPSPGTDNPLDWLFGKSQGEQADGRGRPNRTGSSDPWDVPRQMGKDTGRLCEARVPEHSLGRKPGPRHQTSDLKSWTSRKSCRALASVSSSRPSSILGTLYLHLPVIHEL.

Composition is skewed to polar residues over residues 55-64 (DKVTAQSRPN) and 83-101 (GDSS…SPGT). The tract at residues 55 to 171 (DKVTAQSRPN…RHQTSDLKSW (117 aa)) is disordered. Basic and acidic residues predominate over residues 138 to 155 (MGKDTGRLCEARVPEHSL).

The protein resides in the cytoplasm. The protein localises to the peroxisome. Its subcellular location is the mitochondrion. Its function is as follows. Acts as a critical modulator of FOXO3-induced autophagy via increased cellular ROS. The chain is Protein DEPP1 (Depp1) from Mus musculus (Mouse).